The sequence spans 283 residues: 4-diphosphocytidyl-2-C-methyl-D-erythritol kinase (283 aa).

Lysine 10 is a catalytic residue. 99 to 109 provides a ligand contact to ATP; that stretch reads PMGGGLGGGSS. Aspartate 141 is an active-site residue.

Belongs to the GHMP kinase family. IspE subfamily. Homodimer.

It carries out the reaction 4-CDP-2-C-methyl-D-erythritol + ATP = 4-CDP-2-C-methyl-D-erythritol 2-phosphate + ADP + H(+). The protein operates within isoprenoid biosynthesis; isopentenyl diphosphate biosynthesis via DXP pathway; isopentenyl diphosphate from 1-deoxy-D-xylulose 5-phosphate: step 3/6. Functionally, catalyzes the phosphorylation of the position 2 hydroxy group of 4-diphosphocytidyl-2C-methyl-D-erythritol. The protein is 4-diphosphocytidyl-2-C-methyl-D-erythritol kinase of Salmonella enteritidis PT4 (strain P125109).